The primary structure comprises 407 residues: Arrestin domain-containing protein 2 (407 aa).

It belongs to the arrestin family. As to quaternary structure, interacts with WWP1 (via WW domains).

This Mus musculus (Mouse) protein is Arrestin domain-containing protein 2 (Arrdc2).